A 429-amino-acid chain; its full sequence is Histidine--tRNA ligase (429 aa).

The protein belongs to the class-II aminoacyl-tRNA synthetase family. As to quaternary structure, homodimer.

Its subcellular location is the cytoplasm. It catalyses the reaction tRNA(His) + L-histidine + ATP = L-histidyl-tRNA(His) + AMP + diphosphate + H(+). The protein is Histidine--tRNA ligase of Streptococcus pneumoniae (strain Taiwan19F-14).